Consider the following 159-residue polypeptide: Bacterioferritin (159 aa).

Residues 1 to 145 (MQGDPDVLRL…TQLALMGQLG (145 aa)) enclose the Ferritin-like diiron domain. 2 residues coordinate Fe cation: glutamate 18 and glutamate 51. Residue methionine 52 participates in heme b binding. The Fe cation site is built by histidine 54, glutamate 94, glutamate 127, and histidine 130.

It belongs to the bacterioferritin family. Homooligomer of 24 subunits, arranged as 12 dimers, that are packed together to form an approximately spherical molecule with a central cavity, in which large amounts of iron can be deposited. It depends on heme b as a cofactor.

It localises to the cytoplasm. Its subcellular location is the cytosol. The protein resides in the membrane. The catalysed reaction is 4 Fe(2+) + O2 + 4 H(+) = 4 Fe(3+) + 2 H2O. It carries out the reaction Fe(2+)(in) = Fe(2+)(out). Functionally, iron-storage protein, whose ferroxidase center binds Fe(2+), oxidizes it using dioxygen to Fe(3+), and participates in the subsequent Fe(3+) oxide mineral core formation within the central cavity of the BFR protein shell. Probably plays a crucial role in the intracellular existence of this organism by functioning as a temporary depository for iron in iron deprivation. This is Bacterioferritin (bfr) from Mycobacterium leprae (strain TN).